The chain runs to 469 residues: Aspartyl/glutamyl-tRNA(Asn/Gln) amidotransferase subunit B (469 aa).

This sequence belongs to the GatB/GatE family. GatB subfamily. Heterotrimer of A, B and C subunits.

It carries out the reaction L-glutamyl-tRNA(Gln) + L-glutamine + ATP + H2O = L-glutaminyl-tRNA(Gln) + L-glutamate + ADP + phosphate + H(+). The enzyme catalyses L-aspartyl-tRNA(Asn) + L-glutamine + ATP + H2O = L-asparaginyl-tRNA(Asn) + L-glutamate + ADP + phosphate + 2 H(+). Its function is as follows. Allows the formation of correctly charged Asn-tRNA(Asn) or Gln-tRNA(Gln) through the transamidation of misacylated Asp-tRNA(Asn) or Glu-tRNA(Gln) in organisms which lack either or both of asparaginyl-tRNA or glutaminyl-tRNA synthetases. The reaction takes place in the presence of glutamine and ATP through an activated phospho-Asp-tRNA(Asn) or phospho-Glu-tRNA(Gln). The polypeptide is Aspartyl/glutamyl-tRNA(Asn/Gln) amidotransferase subunit B (Thermus thermophilus (strain ATCC BAA-163 / DSM 7039 / HB27)).